The chain runs to 246 residues: Alpha-tubulin N-acetyltransferase (246 aa).

The N-acetyltransferase domain occupies 21-202; it reads LTLVPDGVSR…NNFVVFHSFF (182 aa). Acetyl-CoA is bound by residues 135 to 148 and 172 to 181; these read FYVD…GYGK and SNKLLGFLRK.

This sequence belongs to the acetyltransferase ATAT1 family.

The enzyme catalyses L-lysyl-[alpha-tubulin] + acetyl-CoA = N(6)-acetyl-L-lysyl-[alpha-tubulin] + CoA + H(+). Its function is as follows. Specifically acetylates 'Lys-40' in alpha-tubulin on the lumenal side of microtubules. Promotes microtubule destabilization and accelerates microtubule dynamics; this activity may be independent of acetylation activity. Acetylates alpha-tubulin with a slow enzymatic rate, due to a catalytic site that is not optimized for acetyl transfer. Enters the microtubule through each end and diffuses quickly throughout the lumen of microtubules. Acetylates only long/old microtubules because of its slow acetylation rate since it does not have time to act on dynamically unstable microtubules before the enzyme is released. The protein is Alpha-tubulin N-acetyltransferase of Leishmania infantum.